The chain runs to 744 residues: 3-isopropylmalate dehydratase (744 aa).

Positions 341, 401, and 404 each coordinate [4Fe-4S] cluster.

It belongs to the aconitase/IPM isomerase family. Monomer. It depends on [4Fe-4S] cluster as a cofactor.

It catalyses the reaction (2R,3S)-3-isopropylmalate = (2S)-2-isopropylmalate. The protein operates within amino-acid biosynthesis; L-leucine biosynthesis; L-leucine from 3-methyl-2-oxobutanoate: step 2/4. Functionally, catalyzes the isomerization between 2-isopropylmalate and 3-isopropylmalate, via the formation of 2-isopropylmaleate. This chain is 3-isopropylmalate dehydratase (leu1), found in Phycomyces blakesleeanus (strain ATCC 8743b / DSM 1359 / FGSC 10004 / NBRC 33097 / NRRL 1555).